Here is a 302-residue protein sequence, read N- to C-terminus: Ribosome-binding factor PSRP1, chloroplastic (302 aa).

The N-terminal 66 residues, 1-66, are a transit peptide targeting the chloroplast; it reads MATLCTSAIN…SRNKPNVVCM (66 aa).

In terms of assembly, binds to the mRNA channel of the chloroplast small ribosomal subunit and interacts with 16S sRNA nucleotides at the A-site and P-site.

The protein resides in the plastid. It localises to the chloroplast stroma. Its function is as follows. Ribosome-binding factor involved in light- and temperature-dependent control of protein synthesis. Interacts with 16S sRNA nucleotides at the A-site and P-site, where it protects the decoding center and inhibits translation by preventing tRNA binding. Stabilizes 70S ribosomes against dissociation. May be recycled by the combined action of ribosome-recycling factor (RRF) and EF-G. The protein is Ribosome-binding factor PSRP1, chloroplastic (PSRP1) of Spinacia oleracea (Spinach).